The chain runs to 199 residues: Thymidine kinase (199 aa).

ATP-binding positions include 23-30 and 95-98; these read GSMFSGKT and DEAQ. The active-site Proton acceptor is the Glu96. Residues Cys152, Cys155, Cys184, and Cys187 each contribute to the Zn(2+) site.

The protein belongs to the thymidine kinase family. As to quaternary structure, homotetramer.

The protein localises to the cytoplasm. It catalyses the reaction thymidine + ATP = dTMP + ADP + H(+). This Bacteroides thetaiotaomicron (strain ATCC 29148 / DSM 2079 / JCM 5827 / CCUG 10774 / NCTC 10582 / VPI-5482 / E50) protein is Thymidine kinase.